Here is a 203-residue protein sequence, read N- to C-terminus: Small ribosomal subunit protein uS3 (203 aa).

This sequence belongs to the universal ribosomal protein uS3 family. Part of the 30S ribosomal subunit. Forms a tight complex with proteins S10 and S14.

In terms of biological role, binds the lower part of the 30S subunit head. Binds mRNA in the 70S ribosome, positioning it for translation. In Carsonella ruddii (strain PV), this protein is Small ribosomal subunit protein uS3.